The primary structure comprises 55 residues: Large ribosomal subunit protein bL33 (55 aa).

This sequence belongs to the bacterial ribosomal protein bL33 family.

The protein is Large ribosomal subunit protein bL33 of Rhodospirillum centenum (strain ATCC 51521 / SW).